The primary structure comprises 210 residues: Coatomer subunit zeta-2 (210 aa).

Positions 1 to 12 are enriched in basic and acidic residues; it reads MQRPEAWPRPHP. Residues 1–34 are disordered; sequence MQRPEAWPRPHPGEGAAAAQAGGPAPPARAGEPS. Residues 13–34 show a composition bias toward low complexity; sequence GEGAAAAQAGGPAPPARAGEPS.

The protein belongs to the adaptor complexes small subunit family. In terms of assembly, oligomeric complex.

Its subcellular location is the cytoplasm. The protein resides in the endoplasmic reticulum-Golgi intermediate compartment membrane. It localises to the golgi apparatus membrane. The protein localises to the cytoplasmic vesicle. It is found in the COPI-coated vesicle membrane. In terms of biological role, the coatomer is a cytosolic protein complex that binds to dilysine motifs and reversibly associates with Golgi non-clathrin-coated vesicles, which further mediate biosynthetic protein transport from the ER, via the Golgi up to the trans Golgi network. Coatomer complex is required for budding from Golgi membranes, and is essential for the retrograde Golgi-to-ER transport of dilysine-tagged proteins. The zeta subunit may be involved in regulating the coat assembly and, hence, the rate of biosynthetic protein transport due to its association-dissociation properties with the coatomer complex. This Homo sapiens (Human) protein is Coatomer subunit zeta-2 (COPZ2).